A 642-amino-acid chain; its full sequence is Threonine--tRNA ligase (642 aa).

A TGS domain is found at Met-1–Thr-61. The segment at Asp-243 to Pro-534 is catalytic. Zn(2+) contacts are provided by Cys-334, His-385, and His-511.

Belongs to the class-II aminoacyl-tRNA synthetase family. As to quaternary structure, homodimer. Zn(2+) serves as cofactor.

It is found in the cytoplasm. It catalyses the reaction tRNA(Thr) + L-threonine + ATP = L-threonyl-tRNA(Thr) + AMP + diphosphate + H(+). Functionally, catalyzes the attachment of threonine to tRNA(Thr) in a two-step reaction: L-threonine is first activated by ATP to form Thr-AMP and then transferred to the acceptor end of tRNA(Thr). Also edits incorrectly charged L-seryl-tRNA(Thr). The sequence is that of Threonine--tRNA ligase from Shewanella loihica (strain ATCC BAA-1088 / PV-4).